The chain runs to 253 residues: Acidic endochitinase Q (253 aa).

The signal sequence occupies residues 1 to 24; that stretch reads MEFSGSPMALFCCVFFLFLTGSLA. Glu92 (proton donor) is an active-site residue. A disulfide bridge connects residues Cys212 and Cys244.

It belongs to the glycosyl hydrolase 19 family. Chitinase class I subfamily.

It is found in the secreted. The enzyme catalyses Random endo-hydrolysis of N-acetyl-beta-D-glucosaminide (1-&gt;4)-beta-linkages in chitin and chitodextrins.. Defense against chitin-containing fungal pathogens. This Nicotiana tabacum (Common tobacco) protein is Acidic endochitinase Q.